Here is a 192-residue protein sequence, read N- to C-terminus: ADP-ribosylation factor-like protein 14 (192 aa).

Glycine 2 is lipidated: N-myristoyl glycine. GTP contacts are provided by residues 20 to 27 (GLDSAGKS), 64 to 68 (DVGGQ), and 123 to 126 (NKQD).

It belongs to the small GTPase superfamily. Arf family. Interacts with ARL14EP. Expressed in immature dendritic cells.

The protein localises to the cytoplasmic vesicle. Functionally, GTPase that recruits MYO1E to MHC class II-containing vesicles via the effector protein ARL14EP and hence controls the movement of these vesicles along the actin cytoskeleton in dendritic cells. This Homo sapiens (Human) protein is ADP-ribosylation factor-like protein 14 (ARL14).